The following is a 647-amino-acid chain: tRNA 5-methylaminomethyl-2-thiouridine biosynthesis bifunctional protein MnmC (647 aa).

The interval 1–235 (MSIPPFSQAS…KRDMLCGRFT (235 aa)) is tRNA (mnm(5)s(2)U34)-methyltransferase. Residues 250-647 (IGGGIAGTAS…RGLACHPLRR (398 aa)) form an FAD-dependent cmnm(5)s(2)U34 oxidoreductase region.

In the N-terminal section; belongs to the methyltransferase superfamily. tRNA (mnm(5)s(2)U34)-methyltransferase family. The protein in the C-terminal section; belongs to the DAO family. Requires FAD as cofactor.

It localises to the cytoplasm. It catalyses the reaction 5-aminomethyl-2-thiouridine(34) in tRNA + S-adenosyl-L-methionine = 5-methylaminomethyl-2-thiouridine(34) in tRNA + S-adenosyl-L-homocysteine + H(+). Its function is as follows. Catalyzes the last two steps in the biosynthesis of 5-methylaminomethyl-2-thiouridine (mnm(5)s(2)U) at the wobble position (U34) in tRNA. Catalyzes the FAD-dependent demodification of cmnm(5)s(2)U34 to nm(5)s(2)U34, followed by the transfer of a methyl group from S-adenosyl-L-methionine to nm(5)s(2)U34, to form mnm(5)s(2)U34. The chain is tRNA 5-methylaminomethyl-2-thiouridine biosynthesis bifunctional protein MnmC from Methylobacillus flagellatus (strain ATCC 51484 / DSM 6875 / VKM B-1610 / KT).